We begin with the raw amino-acid sequence, 480 residues long: Probable glycine dehydrogenase (decarboxylating) subunit 2 (480 aa).

Lysine 265 bears the N6-(pyridoxal phosphate)lysine mark.

Belongs to the GcvP family. C-terminal subunit subfamily. The glycine cleavage system is composed of four proteins: P, T, L and H. In this organism, the P 'protein' is a heterodimer of two subunits. Requires pyridoxal 5'-phosphate as cofactor.

It catalyses the reaction N(6)-[(R)-lipoyl]-L-lysyl-[glycine-cleavage complex H protein] + glycine + H(+) = N(6)-[(R)-S(8)-aminomethyldihydrolipoyl]-L-lysyl-[glycine-cleavage complex H protein] + CO2. Functionally, the glycine cleavage system catalyzes the degradation of glycine. The P protein binds the alpha-amino group of glycine through its pyridoxal phosphate cofactor; CO(2) is released and the remaining methylamine moiety is then transferred to the lipoamide cofactor of the H protein. The sequence is that of Probable glycine dehydrogenase (decarboxylating) subunit 2 from Thermosipho africanus (strain TCF52B).